The following is a 474-amino-acid chain: tRNA-2-methylthio-N(6)-dimethylallyladenosine synthase (474 aa).

Residues 3–120 (QKLHIKTWGC…LPEMINQIRG (118 aa)) form the MTTase N-terminal domain. Residues C12, C49, C83, C157, C161, and C164 each contribute to the [4Fe-4S] cluster site. The 233-residue stretch at 143 to 375 (KAEGPTAFVS…QQRINNQAAK (233 aa)) folds into the Radical SAM core domain. The TRAM domain occupies 378-441 (RAMLGTEQRV…TNSLRGDVIR (64 aa)).

Belongs to the methylthiotransferase family. MiaB subfamily. In terms of assembly, monomer. [4Fe-4S] cluster serves as cofactor.

The protein resides in the cytoplasm. It carries out the reaction N(6)-dimethylallyladenosine(37) in tRNA + (sulfur carrier)-SH + AH2 + 2 S-adenosyl-L-methionine = 2-methylsulfanyl-N(6)-dimethylallyladenosine(37) in tRNA + (sulfur carrier)-H + 5'-deoxyadenosine + L-methionine + A + S-adenosyl-L-homocysteine + 2 H(+). Functionally, catalyzes the methylthiolation of N6-(dimethylallyl)adenosine (i(6)A), leading to the formation of 2-methylthio-N6-(dimethylallyl)adenosine (ms(2)i(6)A) at position 37 in tRNAs that read codons beginning with uridine. The chain is tRNA-2-methylthio-N(6)-dimethylallyladenosine synthase from Actinobacillus succinogenes (strain ATCC 55618 / DSM 22257 / CCUG 43843 / 130Z).